Reading from the N-terminus, the 398-residue chain is Lysophospholipid transporter LplT (398 aa).

Helical transmembrane passes span 17-37 (AVLVSQFFSAFADNALLFAIL), 52-72 (ILQIVFVLAYILLAPFVGQIA), 90-110 (LGAFTICLGYDPFLGYALVGV), 137-157 (GLMEASTIIAILTGSVVGGFL), 163-183 (AIALLVCALMYGIAVVANFFI), 226-246 (LFWGAGITLRFLLVLWVPVVL), 256-276 (ILNVMVAVGIIIGAGAAARFI), 285-305 (MPAGVLIGVMVVIFAVQHSIW), 309-329 (VLLIILGIFGGLFIVPLNALL), 352-372 (IAMLLMLGLYSLVIKIGVPVV), and 373-393 (TTGIGFGTLLALTITSLWIWN).

The protein belongs to the major facilitator superfamily. LplT (TC 2.A.1.42) family.

The protein localises to the cell inner membrane. Functionally, catalyzes the facilitated diffusion of 2-acyl-glycero-3-phosphoethanolamine (2-acyl-GPE) into the cell. The chain is Lysophospholipid transporter LplT from Photorhabdus laumondii subsp. laumondii (strain DSM 15139 / CIP 105565 / TT01) (Photorhabdus luminescens subsp. laumondii).